Reading from the N-terminus, the 693-residue chain is Elongation factor G (693 aa).

The tr-type G domain maps to 8 to 282; sequence EKTRNIGIMA…AVIDYLPSPL (275 aa). Residues 17 to 24, 81 to 85, and 135 to 138 contribute to the GTP site; these read AHVDAGKT, DTPGH, and NKMD.

It belongs to the TRAFAC class translation factor GTPase superfamily. Classic translation factor GTPase family. EF-G/EF-2 subfamily.

It is found in the cytoplasm. In terms of biological role, catalyzes the GTP-dependent ribosomal translocation step during translation elongation. During this step, the ribosome changes from the pre-translocational (PRE) to the post-translocational (POST) state as the newly formed A-site-bound peptidyl-tRNA and P-site-bound deacylated tRNA move to the P and E sites, respectively. Catalyzes the coordinated movement of the two tRNA molecules, the mRNA and conformational changes in the ribosome. The chain is Elongation factor G from Streptococcus pneumoniae (strain P1031).